The following is a 180-amino-acid chain: Ribulose bisphosphate carboxylase small subunit, chloroplastic 3 (180 aa).

The N-terminal 56 residues, 1-56 (MASSVMSSAAVATRGNGAQASMVAPFTGLKSTASFPVSRKQNLDITSIASNGGRVS), are a transit peptide targeting the chloroplast.

Belongs to the RuBisCO small chain family. In terms of assembly, heterohexadecamer of 8 large and 8 small subunits. (Microbial infection) Binds to tobamovirus movement protein; this interaction seems required for viral systemic movement.

Its subcellular location is the plastid. It localises to the chloroplast. The protein localises to the cell junction. The protein resides in the plasmodesma. Functionally, ruBisCO catalyzes two reactions: the carboxylation of D-ribulose 1,5-bisphosphate, the primary event in carbon dioxide fixation, as well as the oxidative fragmentation of the pentose substrate. Both reactions occur simultaneously and in competition at the same active site. Although the small subunit is not catalytic it is essential for maximal activity. Involved in antiviral defenses. This is Ribulose bisphosphate carboxylase small subunit, chloroplastic 3 from Solanum lycopersicum (Tomato).